A 330-amino-acid polypeptide reads, in one-letter code: Short chain dehydrogenase yanD (330 aa).

Lys-57, Asp-86, Asn-113, Tyr-204, and Lys-208 together coordinate NADP(+). Tyr-204 functions as the Proton donor in the catalytic mechanism. The Lowers pKa of active site Tyr role is filled by Lys-208.

The protein belongs to the short-chain dehydrogenases/reductases (SDR) family.

Its pathway is secondary metabolite biosynthesis; terpenoid biosynthesis. Its function is as follows. Short chain dehydrogenase; part of the gene cluster that mediates the biosynthesis of yanuthone D, a fungal isoprenoid epoxycyclohexenone that acts as an antibiotic against fungi and bacteria. The first step of the pathway is the synthesis of 6-methylsalicylic acid (6-MSA) by the polyketide synthase yanA. 6-MSA is then converted to m-cresol by the decarboxylase yanB. The cytochrome P450 monooxygenase yanC then catalyzes the oxidation of m-cresol to toluquinol. Epoxidation of toluquinol is then performed by the short chain dehydrogenase yanD, with the help of yanE, and a further prenylation by yanG leads to 7-deacetoxyyanuthone A. The next step is the hydroxylation of C-22 of 7-deacetoxyyanuthone A by the cytochrome P450 monooxygenase yanH to yield 22-deacetylyanuthone A. O-Mevalon transferase yanI then attaches mevalon to the hydroxyl group of 22-deacetylyanuthone A to produce yanuthone E. Finally, the FAD-dependent monooxygenase yanF oxidizes the hydroxyl group at C15 of yanuthone E to form yanuthone D. Furthermore, several branching points in the pathway lead to the production of yanuthones F and G from 7-deacetoxyyanuthone A; yanuthones H and I from 22-deacetylyanuthone A; and yanuthone J from yanuthone E. YanD is also involved in the synthesis of yanuthone X1 which does not have 6-methylsalicylic acid (6-MSA) as precursor. The polypeptide is Short chain dehydrogenase yanD (Aspergillus niger (strain ATCC 1015 / CBS 113.46 / FGSC A1144 / LSHB Ac4 / NCTC 3858a / NRRL 328 / USDA 3528.7)).